Reading from the N-terminus, the 593-residue chain is Zinc metalloproteinase-disintegrin-like kaouthiagin-like (593 aa).

The signal sequence occupies residues 1–20 (MIQALLVIICLAVFPHQGSS). Positions 21–196 (IILESGNVND…KTSQFTNTPE (176 aa)) are excised as a propeptide. Residues 205–400 (KYIEFYVIVD…DRPQCILNKP (196 aa)) enclose the Peptidase M12B domain. Residues glutamate 208 and aspartate 292 each contribute to the Ca(2+) site. Cystine bridges form between cysteine 316–cysteine 395, cysteine 356–cysteine 379, and cysteine 358–cysteine 363. N-linked (GlcNAc...) asparagine glycosylation is present at asparagine 319. Positions 341, 345, and 351 each coordinate Zn(2+). Cysteine 395, asparagine 398, isoleucine 410, asparagine 413, phenylalanine 415, glutamate 417, glutamate 420, and aspartate 423 together coordinate Ca(2+). Residues 408-477 (PPICGNYFVE…ECPTDSLQRN (70 aa)) enclose the Disintegrin domain. Intrachain disulfides connect cysteine 411/cysteine 440, cysteine 422/cysteine 435, cysteine 424/cysteine 430, cysteine 434/cysteine 462, cysteine 449/cysteine 469, cysteine 456/cysteine 488, cysteine 481/cysteine 493, cysteine 500/cysteine 550, cysteine 515/cysteine 558, cysteine 528/cysteine 538, cysteine 545/cysteine 581, and cysteine 575/cysteine 586. The short motif at 455–457 (DCD) is the D/ECD-tripeptide element. The Ca(2+) site is built by aspartate 457, leucine 458, glutamate 460, aspartate 472, and serine 473. Asparagine 490 carries an N-linked (GlcNAc...) asparagine glycan.

It belongs to the venom metalloproteinase (M12B) family. P-III subfamily. P-IIIa sub-subfamily. As to quaternary structure, monomer. Requires Zn(2+) as cofactor. Expressed by the venom gland.

It localises to the secreted. Snake venom zinc metalloproteinase that cleaves the membrane-bound precursor of TNF-alpha (TNF) into its mature soluble form showing the same digestion pattern than ADAM17. The polypeptide is Zinc metalloproteinase-disintegrin-like kaouthiagin-like (Naja atra (Chinese cobra)).